We begin with the raw amino-acid sequence, 178 residues long: Ribosome rescue factor SmrB (178 aa).

Residues 99–174 (LDLHGLTQMQ…GNAALLILIE (76 aa)) enclose the Smr domain.

The protein belongs to the SmrB family. As to quaternary structure, associates with collided ribosomes, but not with correctly translating polysomes.

In terms of biological role, acts as a ribosome collision sensor. Detects stalled/collided disomes (pairs of ribosomes where the leading ribosome is stalled and a second ribosome has collided with it) and endonucleolytically cleaves mRNA at the 5' boundary of the stalled ribosome. Stalled/collided disomes form a new interface (primarily via the 30S subunits) that binds SmrB. Cleaved mRNA becomes available for tmRNA ligation, leading to ribosomal subunit dissociation and rescue of stalled ribosomes. This chain is Ribosome rescue factor SmrB, found in Photorhabdus laumondii subsp. laumondii (strain DSM 15139 / CIP 105565 / TT01) (Photorhabdus luminescens subsp. laumondii).